The following is a 291-amino-acid chain: Small ribosomal subunit protein uS2 (291 aa).

This sequence belongs to the universal ribosomal protein uS2 family.

The protein is Small ribosomal subunit protein uS2 of Lawsonia intracellularis (strain PHE/MN1-00).